A 443-amino-acid chain; its full sequence is D-serine dehydratase (443 aa).

An N6-(pyridoxal phosphate)lysine modification is found at lysine 118.

This sequence belongs to the serine/threonine dehydratase family. DsdA subfamily. In terms of assembly, monomer. The cofactor is pyridoxal 5'-phosphate.

The catalysed reaction is D-serine = pyruvate + NH4(+). The chain is D-serine dehydratase from Yersinia enterocolitica serotype O:8 / biotype 1B (strain NCTC 13174 / 8081).